Here is a 469-residue protein sequence, read N- to C-terminus: Ribulose bisphosphate carboxylase large chain (469 aa).

Asparagine 115 and threonine 165 together coordinate substrate. Lysine 167 functions as the Proton acceptor in the catalytic mechanism. Residue lysine 169 coordinates substrate. 3 residues coordinate Mg(2+): lysine 193, aspartate 195, and glutamate 196. The residue at position 193 (lysine 193) is an N6-carboxylysine. Residue histidine 286 is the Proton acceptor of the active site. Substrate-binding residues include arginine 287, histidine 319, and serine 371.

The protein belongs to the RuBisCO large chain family. Type I subfamily. Heterohexadecamer of 8 large chains and 8 small chains. Mg(2+) is required as a cofactor.

The protein localises to the plastid. The protein resides in the organellar chromatophore. The enzyme catalyses 2 (2R)-3-phosphoglycerate + 2 H(+) = D-ribulose 1,5-bisphosphate + CO2 + H2O. It catalyses the reaction D-ribulose 1,5-bisphosphate + O2 = 2-phosphoglycolate + (2R)-3-phosphoglycerate + 2 H(+). Functionally, ruBisCO catalyzes two reactions: the carboxylation of D-ribulose 1,5-bisphosphate, the primary event in carbon dioxide fixation, as well as the oxidative fragmentation of the pentose substrate. Both reactions occur simultaneously and in competition at the same active site. The sequence is that of Ribulose bisphosphate carboxylase large chain from Paulinella chromatophora.